A 313-amino-acid chain; its full sequence is Malate dehydrogenase (313 aa).

NAD(+)-binding positions include 11 to 16 and D35; that span reads GAGSIG. 2 residues coordinate substrate: R84 and R90. NAD(+) contacts are provided by residues N97 and 120 to 122; that span reads VTN. Substrate-binding residues include N122 and R153. The active-site Proton acceptor is H177.

The protein belongs to the LDH/MDH superfamily. MDH type 3 family.

It carries out the reaction (S)-malate + NAD(+) = oxaloacetate + NADH + H(+). In terms of biological role, catalyzes the reversible oxidation of malate to oxaloacetate. This is Malate dehydrogenase from Ehrlichia chaffeensis (strain ATCC CRL-10679 / Arkansas).